Consider the following 228-residue polypeptide: Ribosomal RNA small subunit methyltransferase G (228 aa).

Residues Gly-89, Leu-94, 140-141 (VE), and Arg-159 each bind S-adenosyl-L-methionine.

Belongs to the methyltransferase superfamily. RNA methyltransferase RsmG family.

It is found in the cytoplasm. It carries out the reaction guanosine(527) in 16S rRNA + S-adenosyl-L-methionine = N(7)-methylguanosine(527) in 16S rRNA + S-adenosyl-L-homocysteine. Functionally, specifically methylates the N7 position of guanine in position 527 of 16S rRNA. The polypeptide is Ribosomal RNA small subunit methyltransferase G (Burkholderia multivorans (strain ATCC 17616 / 249)).